Consider the following 150-residue polypeptide: Large ribosomal subunit protein bL9 (150 aa).

This sequence belongs to the bacterial ribosomal protein bL9 family.

Binds to the 23S rRNA. The polypeptide is Large ribosomal subunit protein bL9 (Vibrio campbellii (strain ATCC BAA-1116)).